Here is a 357-residue protein sequence, read N- to C-terminus: Probable leucine aminopeptidase MCYG_04170 (357 aa).

Residues 1 to 15 (MKVLAALALSALALA) form the signal peptide. N76 carries N-linked (GlcNAc...) asparagine glycosylation. 2 residues coordinate Zn(2+): H167 and D185. N186 carries an N-linked (GlcNAc...) asparagine glycan. Residues E224 and D251 each coordinate Zn(2+). Residues C291 and C295 are joined by a disulfide bond. H324 contacts Zn(2+).

This sequence belongs to the peptidase M28 family. M28E subfamily. As to quaternary structure, monomer. Requires Zn(2+) as cofactor.

It localises to the secreted. Its function is as follows. Probable extracellular aminopeptidase which contributes to pathogenicity. The protein is Probable leucine aminopeptidase MCYG_04170 of Arthroderma otae (strain ATCC MYA-4605 / CBS 113480) (Microsporum canis).